The primary structure comprises 1338 residues: MDMAPDELDELRGSAQRALEQAIDFSFSCQQDDGHWVAPVSADATFTAQYVMFKHAIPALNLDISGAEAAALRHWLLGDQNAAEGSWGLAPGLPGNLSTTVEAYLALRLLGVPSSNPALQQARRFVLAHGGISRVRFFTRFFLATFGLFPWSAIPQMPAELILMPKWAPLNIYVLSSWARSTLIPILVVRHHEPLYPLPNAQSDPNSGFLDELWLDPTNKEVPFAPPLWDMFHGRDRDVVKLAFTLGDKALAQIGGLKKGPQRRLALRRCIEWLLEHQEETGDWAGFFPPMHGSVWALLLEGFSLEHDVVKRGLEALERLAVNDESGKWLQSTVSPCWDTALMVKALCDAGLGLGGAEAAKGNRHARVTTAVDWVRSLQLLGPQGDWRVYSRNQRPGGWSFEYNNTWYPDVDDTAVVVMMLVTHDPAAVESNAVEMGIEWILGMQNHDGGWGAFDTNNDALWLHKIPFSDMDSLVDPSTSDVTGRMLECFGMLLTHRKGGLRLRPELSQRLHESAQKALAFLFREQTASGAWWGRWGCNYNYGTTNVLRGLPAFCGDKEVARAALRAVLWLEKCQNKDGGWGETLLSYGHPDLAGKGPSTAAHTAWALDALLRFRPASDPALQKGVQWLVSNQVPKTEEKRHWASWPSDLYVGTGFPNVLYLGYPFYHHHFAISALARFLDRTDEPDQDRDLPLLMTRHVVTTLTRHDILLMVLGSRGDIDVFLSIAGKLAKNRHRVRVATHPAHQQLVEAHGFEFYDVGGGPDEFAQVLGREPNLLWSVIRGDLGRLRQSLCRTFARFWEAGYGSNNTRNARNADPKANGIADSRPFVADLIVSTPATTVHVHAAETLRAPLVLIAAQPTLPTREFPHVFTMNKPRYSPGSWWNYATFFFLELLNWLAMGSFVNKLRVHTYKMKPLCWVWATQDFLTAKIPLVCLWSSNVVPRPPEWHDEVMVAGSTTLAQVDQFTPPLSLLEFLNADMEKPTVVVSFGSMFIADPPALISAIASAAAQVRAKVVICRSWRWKLESSLASLPSHTYVADAIPHSWLLPRVDGFVHHGGAGHTAAGLRAGVPMLITPFFLDQHFWAAKVHNLGLGPEPLEIMMRAGTVAGIQTHQGKMQFAQSMQDLLSGQYSRRCAEMSERVRAETDGANVAADVIERELGSALARSGHCAVVPALPAQWQHAESGLALCGVAAASLVTSGMLDWDDLDAITRIDWIARRQKDPKSRLHAICFVADWLGHAFGMLLAVAGWLLQLVGDVRSVGRVKPHHNTDPIRLAMMERSMFDLNFAKQGLAEAELKGGAFEELLARRWRAAVAAAFERRMERTGNMLLGEGCQG.

Residues 1 to 687 are terpenne cyclase; the sequence is MDMAPDELDE…RFLDRTDEPD (687 aa). 3 PFTB repeats span residues 19–61, 69–111, and 267–307; these read LEQA…PALN, AAAL…RLLG, and LRRC…SLEH. Aspartate 412 (proton donor) is an active-site residue. 3 PFTB repeats span residues 434-475, 515-556, and 564-615; these read VEMG…DSLV, AQKA…AFCG, and ALRA…LRFR. The glycosyltransferase stretch occupies residues 688 to 1338; that stretch reads QDRDLPLLMT…NMLLGEGCQG (651 aa).

In the N-terminal section; belongs to the terpene cyclase/mutase family. This sequence in the C-terminal section; belongs to the glycosyltransferase 28 family.

It catalyses the reaction (S)-2,3-epoxysqualene = isomotiol. The enzyme catalyses isomotiol + UDP-alpha-D-glucose = 3-O-(beta-D-glucopyranosyl)-isomotiol + UDP + H(+). It carries out the reaction 2alpha-hydroxyisomotiol + UDP-alpha-D-glucose = 3-O-(beta-D-glucopyranosyl)-2alpha-hydroxyisomotiol + UDP + H(+). It functions in the pathway secondary metabolite biosynthesis; terpenoid biosynthesis. Functionally, terpene cyclase-glycosyl transferase fusion protein; part of the gene cluster that mediates the biosynthesis of the enfumafungin-type antibiotic, fuscoatroside. Within the pathway, fsoA plays two important roles, the cyclization of 2,3(S)-oxidosqualene into isomotiol via its terpene cyclase (TC) domain and the C3 glycosylation of several intermediates via its glycosyltransferase (GT) domain. The fuscoatroside biosynthesis is initiated by the cyclization of 2,3(S)-oxidosqualene through FsoA's TC domain, leading to the formation of the fernane skeleton isomotiol, harboring a fernane triterpene skeleton with a C8-C9 double bond. Subsequently, C2-alpha-hydroxylation mediated by fsoD results in the production of 2-alpha-hydroxy-isomotiol, which is further acetylated by fsoF. The GT domain of FsoA may convert isomotiol, 2-alpha-hydroxy-isomotiol, and the acetylated derivative of 2-alpha-hydroxy-isomotiol into their corresponding glycosides 3-O-(beta-D-glucopyranosyl)-isomotiol, 3-O-(beta-D-glucopyranosyl)-2-alpha-hydroxy-isomotiol, and 3-O-(beta-D-glucopyranosyl)-2-alpha-acetoxy-isomotiol, which then undergo oxidative cleavage under the action of fsoE to form s 2-deacetoxy-fuscoatroside, 2-deacetyl-fuscoatroside, and fuscoatroside, respectively. Although hydroxylation followed by acetylation of 3-O-(beta-D-glucopyranosyl)-isomotiol and 2-deacetoxy-fuscoatroside by fsoD and fsoF could not be ruled out, this process is likely to occur with difficulty due to bulky steric hindrance caused by the presence of a glycan at C3 in these compounds. Interestingly, fsoE can also utilize the aglycones isomotiol and 2-alpha-hydroxy-isomotiol as substrates to generate 19-beta-hydroxy-isomotiol and 2-alpha,19-beta-dihydroxy-isomotiol, respectively. These reactions occur with lower efficiency. Finally, fsoE can further convert 2-alpha,19-beta-dihydroxy-isomotiol into 2-alpha-hydroxy-ismotiol-19-one and 2-alpha-hydroxy-ismotiol-19-one into 2-deacetyl-3-deglucopyranosyl-fuscoatroside. The protein is Terpene cyclase-glycosyl transferase fusion protein fsoA of Humicola fuscoatra.